Consider the following 200-residue polypeptide: Pyrrolidone-carboxylate peptidase (200 aa).

Active-site residues include E79, C142, and H166.

This sequence belongs to the peptidase C15 family. In terms of assembly, homotetramer.

The protein localises to the cytoplasm. The catalysed reaction is Release of an N-terminal pyroglutamyl group from a polypeptide, the second amino acid generally not being Pro.. Removes 5-oxoproline from various penultimate amino acid residues except L-proline. The sequence is that of Pyrrolidone-carboxylate peptidase (pcp) from Pyrococcus abyssi (strain GE5 / Orsay).